A 1024-amino-acid chain; its full sequence is PH and SEC7 domain-containing protein 1 (1024 aa).

A disordered region spans residues 67-96 (CTPLRAPPSPHIAPSPWGPSSPTGQPPPGA). Residues 71–95 (RAPPSPHIAPSPWGPSSPTGQPPPG) are compositionally biased toward pro residues. Phosphoserine is present on residues Ser-126 and Ser-156. Disordered regions lie at residues 154–195 (STSD…LPNG), 250–277 (PSSGAKPPEQVLPSRGVGSKQGSGVAVG), 307–401 (REEA…GPDS), and 434–536 (PTQS…LDST). A compositionally biased stretch (acidic residues) spans 348–365 (NEDDEAGGEEDVDDEVFE). Residues 445-463 (PPQPPAPRPDPPAPAPLAP) show a composition bias toward pro residues. The span at 495–507 (PRKELPSPSHSED) shows a compositional bias: basic and acidic residues. In terms of domain architecture, SEC7 spans 512–706 (GAAPLGSEPP…KALYSSIKNE (195 aa)). At Ser-720 the chain carries Phosphoserine. Positions 756–869 (AVYKHGALVR…WITRINVVAA (114 aa)) constitute a PH domain. Coiled coils occupy residues 898–924 (LSQEEQVRTHEAKLKAMASELREHRAA) and 956–983 (AALLRVKMKAASEELDTIEAALAQAGST). The segment at 976-1024 (ALAQAGSTEDGCPPPHSSPSLRPKPTSQPRAQRPGSETRAGAGSTRPKP) is disordered.

It belongs to the PSD family. In terms of assembly, interacts with ACTN1. Interacts (ARF6-bound form) with KCNK1; does not interact with KCNK1 in the absence of ARF6. As to expression, highest expression detected in brain and some expression detected also in uterus, stomach, ovary and intestine, with isoform 2 being expressed at the highest levels. In the brain, isoform 1 is highly expressed in the strata oriens, radiatum, lacunosum-moleculare of the hippocampal CA1-3 regions and the dentate molecular layer of the hippocampal formation, with lower levels detected in the neuronal cell layers and the stratum lucidum (at protein level). Not detected in tongue, thymus, spleen, lung, heart, liver and kidney.

It localises to the cell membrane. It is found in the cell projection. The protein localises to the ruffle. Its subcellular location is the ruffle membrane. The protein resides in the cleavage furrow. Guanine nucleotide exchange factor for ARF6. Isoform 2 and isoform 3 induce cytoskeletal remodeling, but lead to distinct morphological changes in HeLa cells: isoform 2 induces cell elongation and formation of actin-rich protrusions, whereas isoform 3 promotes the formation of membrane ruffles and loss of stress fibers. This is PH and SEC7 domain-containing protein 1 (Psd) from Mus musculus (Mouse).